The sequence spans 652 residues: Potassium voltage-gated channel subfamily KQT member 1 (652 aa).

The Cytoplasmic portion of the chain corresponds to 1 to 110 (MSSEQPAWTF…YNFLERPTGW (110 aa)). A helical membrane pass occupies residues 111 to 132 (KCFVYHFTVFLIVLICLIFSVL). Topologically, residues 133–143 (STIQQYNNLAT) are extracellular. A helical membrane pass occupies residues 144–166 (ETLFWMEIVLVVFFGAEYVVRLW). The Cytoplasmic portion of the chain corresponds to 167–182 (SAGCRSKYVGVWGRLR). The helical transmembrane segment at 183-208 (FARKPISVIDLIVVVASVIVLCVGSN) threads the bilayer. Residues 209-216 (GQVFATSA) lie on the Extracellular side of the membrane. A helical; Voltage-sensor membrane pass occupies residues 217–232 (IRGIRFLQILRMLHVD). The interval 228–236 (MLHVDRQGG) is interaction with KCNE3. The Cytoplasmic portion of the chain corresponds to 233–250 (RQGGTWRLLGSVVFIHRQ). Gln-234 provides a ligand contact to a 1,2-diacyl-sn-glycero-3-phospho-(1D-myo-inositol-4,5-bisphosphate). A helical transmembrane segment spans residues 251 to 273 (ELITTLYIGFLGLIFSSYFVYLA). Residues 274 to 289 (EKDAIDSSGEYQFGSY) lie on the Extracellular side of the membrane. Residues 290–310 (ADALWWGVVTVTTIGYGDKVP) constitute an intramembrane region (pore-forming). At 311–312 (QT) the chain is on the extracellular side. The chain crosses the membrane as a helical span at residues 313–338 (WIGKTIASCFSVFAISFFALPAGILG). Residues 339–652 (SGFALKVQQK…VPRMTQDNIS (314 aa)) lie on the Cytoplasmic side of the membrane. The interaction with CALM stretch occupies residues 360 to 372 (AAASLIQTAWRCY). The disordered stretch occupies residues 393-419 (HHLMSPSPKPKKSAMVKKKKIRTERDE). Residues 401 to 414 (KPKKSAMVKKKKIR) are compositionally biased toward basic residues. The tract at residues 504–518 (KVIRRMQYFVAKKKF) is interaction with CALM; calcium-dependent. The interaction with KCNE1 C-terminus stretch occupies residues 524–561 (PYDVRDVIEQYSQGHLNLMVRIKELQRRLDQSLGKPSL). The segment at 577 to 605 (IGSRLNRVEDKVTQMDHKLNLITDMLHHL) is interaction with AKAP9. The segment at 578–609 (GSRLNRVEDKVTQMDHKLNLITDMLHHLLTNQ) is C-terminal assembly domain (tetramerization). Residues 609-652 (QQGSQSIRTPHRSNSLNSENHPSRNTLPTYEQLNVPRMTQDNIS) form a disordered region.

Belongs to the potassium channel family. KQT (TC 1.A.1.15) subfamily. Kv7.1/KCNQ1 sub-subfamily. As to quaternary structure, tetramer. Heterotetramer with KCNE1; targets to the membrane raft. Interacts (via C-terminus) with CALM; forms a heterotetramer in a calcium-independent manner. Interacts with KCNE2; form a heterooligomer complex that targets to the membrane raft and leading to currents with an apparently instantaneous activation, a rapid deactivation process and a linear current-voltage relationship and decreases the amplitude of the outward current. Interacts with KCNE3; four KCNE3 molecules are bound to one KCNQ1 tetramer (4:4 KCNQ1:KCNE3 stoichiometry); alters membrane raft localization; affects KCNQ1 structure and gating properties. Interacts with KCNE4; impairs KCNQ1 localization in lipid rafts and inhibits voltage-gated potassium channel activity. Interacts with KCNE5; impairs KCNQ1 localization in lipid rafts and only conducts current upon strong and continued depolarization.

It is found in the cell membrane. It localises to the cytoplasmic vesicle membrane. The protein resides in the membrane raft. The protein localises to the endoplasmic reticulum. Its subcellular location is the basolateral cell membrane. It catalyses the reaction K(+)(in) = K(+)(out). With respect to regulation, PIP2 molecule is essential to activate KCNQ channels by inducing the coupling of the voltage-sensing domain (VSD) and the pore-forming domain (PD). Upon channel activation, PIP2 disrupts the VSD-calmodulin/CALM interactions, causing the release of CALM from the VSD which triggers the opening of the gate. Calcium potentiates KCNQ1 channel current through calcium-bound CALM. Calcium-bound CALM competes with PIP2 to stabilize the channel open state. In terms of biological role, pore-forming subunit of the voltage-gated potassium (Kv) channel involved in the regulation of cardiomyocyte excitability and important in normal development and functions of myocardium, inner ear, stomach and colon. Associates with KCNE beta subunits that modulates current kinetics. Induces a voltage-dependent by rapidly activating and slowly deactivating potassium-selective outward current. Also promotes a delayed voltage activated potassium current showing outward rectification characteristic. During beta-adrenergic receptor stimulation participates in cardiac repolarization by associating with KCNE1 to form the I(Ks) cardiac potassium current that increases the amplitude and slows down the activation kinetics of outward potassium current I(Ks). When associated with KCNE3, forms the potassium channel that is important for cyclic AMP-stimulated intestinal secretion of chloride ions. When associated with KCNE2, forms a heterooligomer complex leading to currents with an apparently instantaneous activation, a rapid deactivation process and a linear current-voltage relationship and decreases the amplitude of the outward current. When associated with KCNE4, inhibits voltage-gated potassium channel activity. When associated with KCNE5, this complex only conducts current upon strong and continued depolarization. The polypeptide is Potassium voltage-gated channel subfamily KQT member 1 (Xenopus laevis (African clawed frog)).